We begin with the raw amino-acid sequence, 162 residues long: UPF0303 protein Arad_3071 (162 aa).

Belongs to the UPF0303 family.

This chain is UPF0303 protein Arad_3071, found in Rhizobium rhizogenes (strain K84 / ATCC BAA-868) (Agrobacterium radiobacter).